Reading from the N-terminus, the 523-residue chain is MAGHTQQPSGRGNPRPAPSPSPVPGTVPGASERVALKKEIGLLSACTIIIGNIIGSGIFISPKGVLEHSGSVGLALFVWVLGGGVTALGSLCYAELGVAIPKSGGDYAYVTEIFGGLAGFLLLWSAVLIMYPTSLAVISMTFSNYVLQPVFPNCIPPTTASRVLSMACLMLLTWVNSSSVRWATRIQDMFTGGKLLALSLIIGVGLLQIFQGHFEELRPSNAFAFWMTPSVGHLALAFLQGSFAFSGWNFLNYVTEEMVDARKNLPRAIFISIPLVTFVYTFTNIAYFTAMSPQELLSSNAVAVTFGEKLLGYFSWVMPVSVALSTFGGINGYLFTYSRLCFSGAREGHLPSLLAMIHVRHCTPIPALLVCCGATAVIMLVGDTYTLINYVSFINYLCYGVTILGLLLLRWRRPALHRPIKVNLLIPVAYLVFWAFLLVFSFISEPMVCGVGVIIILTGVPIFFLGVFWRSKPKCVHRLTESMTHWGQELCFVVYPQDAPEEEENGPCPPSLLPATDKPSKPQ.

A disordered region spans residues 1 to 28 (MAGHTQQPSGRGNPRPAPSPSPVPGTVP). The segment covering 15 to 25 (RPAPSPSPVPG) has biased composition (pro residues). 9 helical membrane-spanning segments follow: residues 40–60 (IGLL…GIFI), 72–92 (VGLA…GSLC), 113–133 (IFGG…MYPT), 268–288 (AIFI…IAYF), 310–330 (LLGY…FGGI), 362–382 (CTPI…MLVG), 388–408 (INYV…GLLL), 424–444 (LLIP…SFIS), and 448–468 (VCGV…LGVF). The interval 499-523 (APEEEENGPCPPSLLPATDKPSKPQ) is disordered.

The protein belongs to the amino acid-polyamine-organocation (APC) superfamily. In terms of assembly, disulfide-linked heterodimer with the amino acid transport protein SLC3A2/4F2hc. In terms of tissue distribution, expressed in brain, heart, kidney, liver, lung, pancreas, placenta, and skeletal muscle.

The protein localises to the cell membrane. The catalysed reaction is L-alanine(in) + glycine(out) = L-alanine(out) + glycine(in). It carries out the reaction L-serine(out) + L-alanine(in) = L-serine(in) + L-alanine(out). The enzyme catalyses L-threonine(out) + L-alanine(in) = L-threonine(in) + L-alanine(out). It catalyses the reaction L-cysteine(out) + L-alanine(in) = L-cysteine(in) + L-alanine(out). The catalysed reaction is 2-aminoisobutanoate(out) + L-alanine(in) = 2-aminoisobutanoate(in) + L-alanine(out). It carries out the reaction D-serine(out) + L-alanine(in) = D-serine(in) + L-alanine(out). The enzyme catalyses D-alanine(out) + L-alanine(in) = D-alanine(in) + L-alanine(out). It catalyses the reaction L-valine(out) + L-alanine(in) = L-valine(in) + L-alanine(out). The catalysed reaction is L-methionine(out) + L-alanine(in) = L-methionine(in) + L-alanine(out). It carries out the reaction beta-alanine(out) + L-alanine(in) = beta-alanine(in) + L-alanine(out). The enzyme catalyses D-cysteine(out) + L-alanine(in) = D-cysteine(in) + L-alanine(out). It catalyses the reaction D-threonine(out) + L-alanine(in) = D-threonine(in) + L-alanine(out). The catalysed reaction is D-isoleucine(out) + D-serine(in) = D-isoleucine(in) + D-serine(out). It carries out the reaction D-serine(in) = D-serine(out). Functionally, associates with SLC3A2/4F2hc to form a functional heterodimeric complex that translocates small neutral L- and D-amino acids across the plasma membrane. Preferentially mediates exchange transport, but can also operate via facilitated diffusion. Acts as a major transporter for glycine, L- and D-serine in the central nervous system. At the spinal cord and brainstem regulates glycine metabolism and glycinergic inhibitory neurotransmission by providing for glycine de novo synthesis from L-serine and glycine recycling from astrocytes to glycinergic motor neurons. At Schaffer collateral-CA1 synapses mediates D-serine and glycine release that modulates post-synaptic activation of NMDA receptors and excitatory glutamatergic transmission. May regulate D-serine release from mesenchymal progenitors located in developing subcutaneous adipose tissue, favoring white adipocyte over thermogenic beige adipocyte lineage commitment. In Homo sapiens (Human), this protein is Asc-type amino acid transporter 1 (SLC7A10).